Reading from the N-terminus, the 273-residue chain is MSEAGTPAEALTYEQAIANLRQTADTGDRYYAAWWLGRFRMKQPEAIALLIEALDDSLDRAPDGGYPLRRNAARALGKLESPEAIAPLIACLQCEDYYVREAATQSLGELQATVAVPALLKLLEGGPEAIAAIPGKPHLTQPADAVMETLGQLRATVAVPVVQAFLEHPIDKIRLAAARSLYQLTGDDHYAERVVQGLSDPKLQRRRSALMDLGAIGYLPAAPQIAQTLAENSLKLISLKGLLDTHLRQQTPEAIAELDESAIALMDLMDGLL.

This sequence belongs to the CpcE/RpcE/PecE family. As to quaternary structure, cpcE and CpcF associate to form a lyase.

In terms of biological role, required for the chromophorylation of the cpcA gene product. This is Phycocyanobilin lyase subunit alpha (cpcE) from Synechococcus elongatus (strain ATCC 33912 / PCC 7942 / FACHB-805) (Anacystis nidulans R2).